The following is a 271-amino-acid chain: 39kDa core protein OPG130 (271 aa).

2 disordered regions span residues 80–101 (PLQV…NTSS) and 140–180 (KDQK…TPPQ). The span at 92–101 (PRQQQTNTSS) shows a compositional bias: polar residues. Low complexity predominate over residues 144 to 165 (TTTTPSTQPSQTLPTTTCTQQS).

It belongs to the orthopoxvirus OPG130 family. As to quaternary structure, interacts with OPG136 and its cleaved form. Post-translationally, its phosphorylation state is regulated by the OPG054 kinase and the OPG106 phosphatase.

The protein resides in the virion. Its subcellular location is the host endoplasmic reticulum-Golgi intermediate compartment membrane. Component of the virion core. Participates in virion assembly. This is 39kDa core protein OPG130 (OPG130) from Homo sapiens (Human).